A 170-amino-acid polypeptide reads, in one-letter code: RNA polymerase sigma factor TcsR (170 aa).

Positions 122-169 (IKDLTQNEKNILRKIYLHGLRESEISRELNISRQAVNKTHLRALEKLK) are sigma-70 factor domain-4. Residues 143-162 (ESEISRELNISRQAVNKTHL) constitute a DNA-binding region (H-T-H motif).

It belongs to the sigma-70 factor family.

Sigma factors are initiation factors that promote the attachment of RNA polymerase to specific initiation sites and are then released. Transcriptional regulator specifically required to activate expression of the toxin gene locus, composed of tcsL and tcdE/utxA. The polypeptide is RNA polymerase sigma factor TcsR (Paraclostridium sordellii (strain ATCC 9714 / DSM 2141 / JCM 3814 / LMG 15708 / NCIMB 10717 / 211) (Clostridium sordellii)).